Here is a 201-residue protein sequence, read N- to C-terminus: MFVSRLAASGLLLLALLAVSLDGKPVQQWSQNWPGPKVPPLVVQQWSQNWPHPQIPPLVVQNWKSPTQLQPRESPAGGTTALREELSLGPDAALDTPPAGPDVGPRGSKAAAAPQRLSKSKGASATSTASRPMRDLRTDGKQARQNWGRMLNPDHHSAPGGGGGGGGGGARRLKGLAKKRAGSGCFGLKLDRIGSMSGLGC.

An N-terminal signal peptide occupies residues 1–23 (MFVSRLAASGLLLLALLAVSLDG). Residues 24 to 47 (KPVQQWSQNWPGPKVPPLVVQQWS) constitute a propeptide that is removed on maturation. Gln-48 carries the pyrrolidone carboxylic acid modification. Positions 58-60 (LVV) are excised as a propeptide. Gln-61 carries the post-translational modification Pyrrolidone carboxylic acid. 2 propeptides span residues 67-95 (TQLQ…AALD) and 107-179 (GSKA…LAKK). The segment at 90–172 (PDAALDTPPA…GGGGGGGARR (83 aa)) is disordered. The segment covering 120 to 130 (SKGASATSTAS) has biased composition (low complexity). The span at 132 to 142 (PMRDLRTDGKQ) shows a compositional bias: basic and acidic residues. A compositionally biased stretch (gly residues) spans 159 to 170 (PGGGGGGGGGGA). Cys-185 and Cys-201 are disulfide-bonded.

It in the N-terminal section; belongs to the bradykinin-potentiating peptide family. This sequence in the central section; belongs to the bradykinin inhibitor peptide family. In the C-terminal section; belongs to the natriuretic peptide family. In terms of tissue distribution, venom gland.

It is found in the secreted. Inhibits the activity of the angiotensin-converting enzyme (ACE) by a preferential interaction with its C-domain. May also potentiate the hypotensive effects of bradykinin. Its function is as follows. Antagonizes the vasodilatory actions of bradykinin at the B2 bradykinin receptor. In terms of biological role, has a vasorelaxant activity in rat aortic strips and a diuretic potency in anesthetized rats. May act by activating natriuretic receptors (NPR1 and/or NPR2). This is Bradykinin potentiating and C-type natriuretic peptides from Sistrurus catenatus edwardsii (Desert massasauga).